The following is a 284-amino-acid chain: Protoheme IX farnesyltransferase (284 aa).

A run of 8 helical transmembrane segments spans residues 13–33 (IIIGNIILIIGSFLFSSFPFF), 35–55 (VFLFFFTILGTSLVIASSCIF), 87–107 (IFASFIGIVGFFILGLFVNIL), 108–128 (SMFLSFIGFVIYVFFYTFFLK), 133–153 (YSTFIGSFSGSIPSVIGHTAI), 162–182 (FLLFIIFIFWQMSHFYAIAIL), 224–244 (FLGYLSYIFLLFFSFFSFYWL), and 264–284 (FYYSIAVVILFNFLISIDFIF).

This sequence belongs to the UbiA prenyltransferase family. Protoheme IX farnesyltransferase subfamily.

It is found in the cell membrane. The enzyme catalyses heme b + (2E,6E)-farnesyl diphosphate + H2O = Fe(II)-heme o + diphosphate. It functions in the pathway porphyrin-containing compound metabolism; heme O biosynthesis; heme O from protoheme: step 1/1. In terms of biological role, converts heme B (protoheme IX) to heme O by substitution of the vinyl group on carbon 2 of heme B porphyrin ring with a hydroxyethyl farnesyl side group. This Buchnera aphidicola subsp. Schizaphis graminum (strain Sg) protein is Protoheme IX farnesyltransferase.